Here is a 345-residue protein sequence, read N- to C-terminus: Ferrochelatase (345 aa).

Histidine 192 and glutamate 295 together coordinate Fe cation.

It belongs to the ferrochelatase family.

It is found in the cytoplasm. It catalyses the reaction heme b + 2 H(+) = protoporphyrin IX + Fe(2+). It participates in porphyrin-containing compound metabolism; protoheme biosynthesis; protoheme from protoporphyrin-IX: step 1/1. Its function is as follows. Catalyzes the ferrous insertion into protoporphyrin IX. The sequence is that of Ferrochelatase from Opitutus terrae (strain DSM 11246 / JCM 15787 / PB90-1).